Here is a 126-residue protein sequence, read N- to C-terminus: Histone H2B (126 aa).

Residues 1-12 are compositionally biased toward low complexity; sequence MPEPAKSAPAAK. The tract at residues 1–35 is disordered; it reads MPEPAKSAPAAKKGSKKAVSKVQKKDGKKRRKSRK. N6-acetyllysine occurs at positions 6 and 13. S15 bears the Phosphoserine mark. Residues K16 and K21 each carry the N6-acetyllysine modification. A glycan (O-linked (GlcNAc) serine) is linked at S113. Residue K121 forms a Glycyl lysine isopeptide (Lys-Gly) (interchain with G-Cter in ubiquitin) linkage.

It belongs to the histone H2B family. As to quaternary structure, the nucleosome is a histone octamer containing two molecules each of H2A, H2B, H3 and H4 assembled in one H3-H4 heterotetramer and two H2A-H2B heterodimers. The octamer wraps approximately 147 bp of DNA. Monoubiquitination of Lys-121 by BRE1 gives a specific tag for epigenetic transcriptional activation and is also prerequisite for histone H3 'Lys-4' and 'Lys-79' methylation. Post-translationally, phosphorylated on Ser-15 during apoptosis; which facilitates apoptotic chromatin condensation. In terms of processing, glcNAcylation at Ser-113 promotes monoubiquitination of Lys-121. It fluctuates in response to extracellular glucose, and associates with transcribed genes. As to expression, expressed by the skin granular glands.

It is found in the nucleus. The protein resides in the secreted. It localises to the chromosome. Core component of nucleosome. Nucleosomes wrap and compact DNA into chromatin, limiting DNA accessibility to the cellular machineries which require DNA as a template. Histones thereby play a central role in transcription regulation, DNA repair, DNA replication and chromosomal stability. DNA accessibility is regulated via a complex set of post-translational modifications of histones, also called histone code, and nucleosome remodeling. Its function is as follows. Has antibacterial activity against the Gram-negative bacteria E.coli and the Gram-positive bacteria S.aureus. In Zhangixalus schlegelii (Japanese gliding frog), this protein is Histone H2B.